Here is a 264-residue protein sequence, read N- to C-terminus: Hemin import ATP-binding protein HmuV (264 aa).

In terms of domain architecture, ABC transporter spans 10–246; that stretch reads LQAQNLSYSI…HTLRKWYQAD (237 aa). Position 42 to 49 (42 to 49) interacts with ATP; the sequence is GPNGAGKS.

It belongs to the ABC transporter superfamily. Heme (hemin) importer (TC 3.A.1.14.5) family. As to quaternary structure, the complex is composed of two ATP-binding proteins (HmuV), two transmembrane proteins (HmuU) and a solute-binding protein (HmuT).

The protein localises to the cell inner membrane. Its function is as follows. Part of the ABC transporter complex HmuTUV involved in hemin import. Responsible for energy coupling to the transport system. This chain is Hemin import ATP-binding protein HmuV, found in Photorhabdus laumondii subsp. laumondii (strain DSM 15139 / CIP 105565 / TT01) (Photorhabdus luminescens subsp. laumondii).